The primary structure comprises 335 residues: Beta-ketoacyl-[acyl-carrier-protein] synthase III (335 aa).

Catalysis depends on residues Cys120 and His261. The segment at 262–266 (QANER) is ACP-binding. Asn291 is a catalytic residue.

Belongs to the thiolase-like superfamily. FabH family. In terms of assembly, homodimer.

Its subcellular location is the cytoplasm. The catalysed reaction is malonyl-[ACP] + acetyl-CoA + H(+) = 3-oxobutanoyl-[ACP] + CO2 + CoA. It functions in the pathway lipid metabolism; fatty acid biosynthesis. Its function is as follows. Catalyzes the condensation reaction of fatty acid synthesis by the addition to an acyl acceptor of two carbons from malonyl-ACP. Catalyzes the first condensation reaction which initiates fatty acid synthesis and may therefore play a role in governing the total rate of fatty acid production. Possesses both acetoacetyl-ACP synthase and acetyl transacylase activities. Its substrate specificity determines the biosynthesis of branched-chain and/or straight-chain of fatty acids. This Chlamydia pneumoniae (Chlamydophila pneumoniae) protein is Beta-ketoacyl-[acyl-carrier-protein] synthase III.